We begin with the raw amino-acid sequence, 216 residues long: GTPase IMAP family member GIMD1 (216 aa).

An AIG1-type G domain is found at 5 to 216; sequence KMIINLAVLG…ENHFQVLSFT (212 aa). Residues 14–22, S35, and 147–149 each bind GTP; these read GKTQSGKSS and HAE.

Belongs to the TRAFAC class TrmE-Era-EngA-EngB-Septin-like GTPase superfamily. AIG1/Toc34/Toc159-like paraseptin GTPase family. IAN subfamily.

This chain is GTPase IMAP family member GIMD1 (Gimd1), found in Rattus norvegicus (Rat).